The sequence spans 290 residues: 4-hydroxybenzoate octaprenyltransferase (290 aa).

8 consecutive transmembrane segments (helical) span residues 23–43, 46–66, 99–119, 141–161, 163–183, 213–233, 234–254, and 268–288; these read IGAL…TPGV, LWIL…GCVV, LFVV…TMTI, LPQV…FAAV, ESVP…AVAY, LIIG…GELN, GLGW…VYQQ, and AFMN…MSYW.

This sequence belongs to the UbiA prenyltransferase family. The cofactor is Mg(2+).

It localises to the cell inner membrane. The catalysed reaction is all-trans-octaprenyl diphosphate + 4-hydroxybenzoate = 4-hydroxy-3-(all-trans-octaprenyl)benzoate + diphosphate. It participates in cofactor biosynthesis; ubiquinone biosynthesis. Functionally, catalyzes the prenylation of para-hydroxybenzoate (PHB) with an all-trans polyprenyl group. Mediates the second step in the final reaction sequence of ubiquinone-8 (UQ-8) biosynthesis, which is the condensation of the polyisoprenoid side chain with PHB, generating the first membrane-bound Q intermediate 3-octaprenyl-4-hydroxybenzoate. The protein is 4-hydroxybenzoate octaprenyltransferase of Escherichia coli O6:K15:H31 (strain 536 / UPEC).